We begin with the raw amino-acid sequence, 272 residues long: Exosome complex component Rrp42 (272 aa).

The protein belongs to the RNase PH family. Rrp42 subfamily. In terms of assembly, component of the archaeal exosome complex. Forms a hexameric ring-like arrangement composed of 3 Rrp41-Rrp42 heterodimers. The hexameric ring associates with a trimer of Rrp4 and/or Csl4 subunits.

It localises to the cytoplasm. In terms of biological role, non-catalytic component of the exosome, which is a complex involved in RNA degradation. Contributes to the structuring of the Rrp41 active site. The sequence is that of Exosome complex component Rrp42 from Thermococcus kodakarensis (strain ATCC BAA-918 / JCM 12380 / KOD1) (Pyrococcus kodakaraensis (strain KOD1)).